Here is a 423-residue protein sequence, read N- to C-terminus: MTKNYSARFVSRLTRDTLALILAGGRGSRLKNLTAWRAKPAVPIGGKFRIIDFPLSNCVNSGVRRICVLTQYKAHSLVRHIQQGWGFMRGYLGEFVELMPASQRIEDSWYAGTADAVYQNLDIVRSHNPEYVLILAGDHVYKMDYGDMLAYHVEREADMTVGCIHVPLKEAKAFGVMSVDENFRVTEFTEKPEHPQPSPGRSDETLASMGIYVFNAAFLYEQLIKNADAFNSSHDFGKDIIPSILRSHYRVIAFPFSDVQGGDPGYWRDVGTVDAFWNANLELIGVSPELNLYDEDWPIWTYQAQLPPAKFIFDNEDRRGMAVDSMVSGGCIIAGAWIGHSLLFSNVWVQSHTEVASSVILPDVKIGKHCHIRKAILDKGCNVPDGTVIGEDLEEDKRRFYVTEEGVVLVTPEMLGQKYRYIR.

Alpha-D-glucose 1-phosphate contacts are provided by residues Y110, G175, 190 to 191, and S208; that span reads EK.

Belongs to the bacterial/plant glucose-1-phosphate adenylyltransferase family. In terms of assembly, homotetramer.

The catalysed reaction is alpha-D-glucose 1-phosphate + ATP + H(+) = ADP-alpha-D-glucose + diphosphate. Its pathway is glycan biosynthesis; glycogen biosynthesis. Involved in the biosynthesis of ADP-glucose, a building block required for the elongation reactions to produce glycogen. Catalyzes the reaction between ATP and alpha-D-glucose 1-phosphate (G1P) to produce pyrophosphate and ADP-Glc. The chain is Glucose-1-phosphate adenylyltransferase from Nitrosococcus oceani (strain ATCC 19707 / BCRC 17464 / JCM 30415 / NCIMB 11848 / C-107).